Here is a 241-residue protein sequence, read N- to C-terminus: tRNA pseudouridine synthase A (241 aa).

Asp-51 (nucleophile) is an active-site residue. A substrate-binding site is contributed by Tyr-110.

The protein belongs to the tRNA pseudouridine synthase TruA family. As to quaternary structure, homodimer.

The enzyme catalyses uridine(38/39/40) in tRNA = pseudouridine(38/39/40) in tRNA. In terms of biological role, formation of pseudouridine at positions 38, 39 and 40 in the anticodon stem and loop of transfer RNAs. This chain is tRNA pseudouridine synthase A, found in Campylobacter jejuni subsp. jejuni serotype O:2 (strain ATCC 700819 / NCTC 11168).